Consider the following 330-residue polypeptide: DNA-directed RNA polymerase subunit alpha (330 aa).

An alpha N-terminal domain (alpha-NTD) region spans residues 1 to 231 (MAILAFQKPD…IYHFMLFSDE (231 aa)). Residues 253-330 (MRQLLKTKLV…DISKYKLDKE (78 aa)) form an alpha C-terminal domain (alpha-CTD) region.

This sequence belongs to the RNA polymerase alpha chain family. As to quaternary structure, homodimer. The RNAP catalytic core consists of 2 alpha, 1 beta, 1 beta' and 1 omega subunit. When a sigma factor is associated with the core the holoenzyme is formed, which can initiate transcription.

The catalysed reaction is RNA(n) + a ribonucleoside 5'-triphosphate = RNA(n+1) + diphosphate. DNA-dependent RNA polymerase catalyzes the transcription of DNA into RNA using the four ribonucleoside triphosphates as substrates. This chain is DNA-directed RNA polymerase subunit alpha, found in Phocaeicola vulgatus (strain ATCC 8482 / DSM 1447 / JCM 5826 / CCUG 4940 / NBRC 14291 / NCTC 11154) (Bacteroides vulgatus).